The sequence spans 94 residues: Large ribosomal subunit protein eL42 (94 aa).

Residues C11, C14, C71, and C74 each coordinate Zn(2+). The C4-type zinc-finger motif lies at 11-74 (CPFCKRHTIH…LDLRFRCTVC (64 aa)).

The protein belongs to the eukaryotic ribosomal protein eL42 family. As to quaternary structure, part of the 50S ribosomal subunit. Zn(2+) is required as a cofactor.

In terms of biological role, binds to the 23S rRNA. This Thermococcus kodakarensis (strain ATCC BAA-918 / JCM 12380 / KOD1) (Pyrococcus kodakaraensis (strain KOD1)) protein is Large ribosomal subunit protein eL42.